Reading from the N-terminus, the 600-residue chain is 1,8-cineole synthase 1, chloroplastic (600 aa).

A chloroplast-targeting transit peptide spans 1 to 31 (MATLRISSALIYQNTLTHHFRLRRPHRFVCK). Asp342 is a dimethylallyl diphosphate binding site. Mg(2+) is bound by residues Asp342 and Asp346. Positions 342-346 (DDIYD) match the DDXXD motif motif. Glu420, Arg484, and Asn487 together coordinate dimethylallyl diphosphate. The Mg(2+) site is built by Asn487, Thr491, and Glu495.

This sequence belongs to the terpene synthase family. Tpsb subfamily. Mg(2+) is required as a cofactor. Requires Mn(2+) as cofactor. In terms of tissue distribution, predominantly expressed in roots and at much lower levels in siliques. Not found in leaves, flowers or stems. Also detected in flowers in cv. Landsberg erecta. Not expressed in root apical meristem and elongation zone. Found in the vascular system of young roots and additionally in the cortex and epidermal cell layer of older roots.

It localises to the plastid. Its subcellular location is the chloroplast. It catalyses the reaction (2E)-geranyl diphosphate + H2O = 1,8-cineole + diphosphate. Its pathway is secondary metabolite biosynthesis; terpenoid biosynthesis. Involved in monoterpene (C10) biosynthesis. The major product is 1,8-cineole (52%) followed by minor amounts of sabinene (14.5%), myrcene (13.3%), (-)-(1S)-beta-pinene (7.8%), (-)-(4S)-limonene (4.0%), (E)-beta-ocimene (2.7%), alpha-terpineol (2.4%), (-)-(1S)-alpha-pinene (1.9%), terpinolene (0.8%), and (+)-alpha-thujene (0.6%). The protein is 1,8-cineole synthase 1, chloroplastic (TPS27) of Arabidopsis thaliana (Mouse-ear cress).